Consider the following 393-residue polypeptide: Metal tolerance protein A2 (393 aa).

Over 1-72 (MVTPKLHLDL…EAQERAASMR (72 aa)) the chain is Cytoplasmic. Residues 73 to 93 (KLLIAVLLCAIFIVVEVVGGI) traverse the membrane as a helical segment. The Vacuolar segment spans residues 94 to 105 (KANSLAILTDAA). Residues 106–126 (HLLSDVAAFAISLFSLWASGW) form a helical membrane-spanning segment. The Cytoplasmic segment spans residues 127–138 (KANPQQSYGFFR). The helical transmembrane segment at 139 to 159 (IEILGALVSIQMIWLLAGILV) threads the bilayer. Residues 160–176 (YEAIVRLNNGSGEVEGS) are Vacuolar-facing. The chain crosses the membrane as a helical span at residues 177–197 (LMFAVSAVGLLVNIAMAILLG). Positions 198–233 (HDHGHGHGHSHDNGHGHSHDHGHGIAATEHHHDSGH) are required for zinc-binding. At 198 to 257 (HDHGHGHGHSHDNGHGHSHDHGHGIAATEHHHDSGHDESQLSDVLIEQKKQRNVNIQGAY) the chain is on the cytoplasmic side. Over residues 202–236 (HGHGHSHDNGHGHSHDHGHGIAATEHHHDSGHDES) the composition is skewed to basic and acidic residues. Residues 202 to 237 (HGHGHSHDNGHGHSHDHGHGIAATEHHHDSGHDESQ) are disordered. Residues 258-278 (LHVLGDSIQSVGVMIGGAIIW) form a helical membrane-spanning segment. The Vacuolar portion of the chain corresponds to 279 to 284 (YKPEWK). Residues 285–305 (ILDLICTLVFSVIVLGTTIGM) traverse the membrane as a helical segment. Over 306 to 393 (LRNILEVLME…SHVTIQIERQ (88 aa)) the chain is Cytoplasmic.

It belongs to the cation diffusion facilitator (CDF) transporter (TC 2.A.4) family. SLC30A subfamily.

Its subcellular location is the membrane. Functionally, involved in sequestration of excess zinc in the cytoplasm into vacuoles to maintain zinc homeostasis. The protein is Metal tolerance protein A2 (MTPA2) of Arabidopsis thaliana (Mouse-ear cress).